Reading from the N-terminus, the 605-residue chain is DNA mismatch repair protein MutL (605 aa).

This sequence belongs to the DNA mismatch repair MutL/HexB family.

This protein is involved in the repair of mismatches in DNA. It is required for dam-dependent methyl-directed DNA mismatch repair. May act as a 'molecular matchmaker', a protein that promotes the formation of a stable complex between two or more DNA-binding proteins in an ATP-dependent manner without itself being part of a final effector complex. The chain is DNA mismatch repair protein MutL from Exiguobacterium sp. (strain ATCC BAA-1283 / AT1b).